Reading from the N-terminus, the 294-residue chain is MLERLSTEYRNKNTMNLDEMSIKEVLEAMNQEDRKVAIAVHKEMEQIEKIVRNVISSFQNGGRLIYIGAGTSGRLGILDAVECPPTFGTDERQVQGFIAGGMKAFTKAVEGAEDCEELAIEDLKGIQLNDKDTVIGIAASGRTPYVIGGLKYANYVGAKTASISCNKGAEMSQLAQVSVEVETGAEVLTGSTRLKAGTAQKLVLNMISTASMIGIGKVYKNLMVDVQSTNQKLVERSKRIIMEATEVDYKEAEAYYEKANRNVKAAIVMILLQCEYGEALEKLKDAKGFVKKAL.

The SIS domain occupies Val-54–Lys-217. The active-site Proton donor is Glu-82. The active site involves Glu-113.

It belongs to the GCKR-like family. MurNAc-6-P etherase subfamily. As to quaternary structure, homodimer.

The enzyme catalyses N-acetyl-D-muramate 6-phosphate + H2O = N-acetyl-D-glucosamine 6-phosphate + (R)-lactate. The protein operates within amino-sugar metabolism; N-acetylmuramate degradation. Its function is as follows. Specifically catalyzes the cleavage of the D-lactyl ether substituent of MurNAc 6-phosphate, producing GlcNAc 6-phosphate and D-lactate. In Bacillus cytotoxicus (strain DSM 22905 / CIP 110041 / 391-98 / NVH 391-98), this protein is N-acetylmuramic acid 6-phosphate etherase.